The following is a 329-amino-acid chain: NADH-quinone oxidoreductase subunit H (329 aa).

9 helical membrane-spanning segments follow: residues 9–29 (LIKI…ATYI), 42–62 (GPSY…IKLF), 75–95 (LIFT…MAPI), 117–137 (IGFL…ILAG), 154–174 (IQLL…LMVV), 188–208 (GGFL…FLIA), 238–258 (LKWG…SFVI), 269–291 (WGFI…LSMW), and 309–329 (WKIM…IILI).

Belongs to the complex I subunit 1 family. In terms of assembly, NDH-1 is composed of 14 different subunits. Subunits NuoA, H, J, K, L, M, N constitute the membrane sector of the complex.

It localises to the cell inner membrane. It catalyses the reaction a quinone + NADH + 5 H(+)(in) = a quinol + NAD(+) + 4 H(+)(out). Functionally, NDH-1 shuttles electrons from NADH, via FMN and iron-sulfur (Fe-S) centers, to quinones in the respiratory chain. The immediate electron acceptor for the enzyme in this species is believed to be ubiquinone. Couples the redox reaction to proton translocation (for every two electrons transferred, four hydrogen ions are translocated across the cytoplasmic membrane), and thus conserves the redox energy in a proton gradient. This subunit may bind ubiquinone. In Helicobacter acinonychis (strain Sheeba), this protein is NADH-quinone oxidoreductase subunit H.